A 427-amino-acid polypeptide reads, in one-letter code: 3-phosphoshikimate 1-carboxyvinyltransferase (427 aa).

3-phosphoshikimate contacts are provided by Lys-21, Ser-22, and Arg-26. Residue Lys-21 coordinates phosphoenolpyruvate. Residues Gly-93 and Arg-121 each coordinate phosphoenolpyruvate. 3-phosphoshikimate-binding residues include Ser-166, Gln-168, Asp-314, and Lys-341. Gln-168 contacts phosphoenolpyruvate. Residue Asp-314 is the Proton acceptor of the active site. Residues Arg-345 and Arg-387 each coordinate phosphoenolpyruvate.

This sequence belongs to the EPSP synthase family. Monomer.

It localises to the cytoplasm. It carries out the reaction 3-phosphoshikimate + phosphoenolpyruvate = 5-O-(1-carboxyvinyl)-3-phosphoshikimate + phosphate. Its pathway is metabolic intermediate biosynthesis; chorismate biosynthesis; chorismate from D-erythrose 4-phosphate and phosphoenolpyruvate: step 6/7. Catalyzes the transfer of the enolpyruvyl moiety of phosphoenolpyruvate (PEP) to the 5-hydroxyl of shikimate-3-phosphate (S3P) to produce enolpyruvyl shikimate-3-phosphate and inorganic phosphate. The protein is 3-phosphoshikimate 1-carboxyvinyltransferase of Alkaliphilus oremlandii (strain OhILAs) (Clostridium oremlandii (strain OhILAs)).